The following is a 228-amino-acid chain: Ribosomal RNA small subunit methyltransferase G (228 aa).

Residues Gly89, Leu94, 140–141 (VE), and Arg159 contribute to the S-adenosyl-L-methionine site.

This sequence belongs to the methyltransferase superfamily. RNA methyltransferase RsmG family.

It localises to the cytoplasm. It carries out the reaction guanosine(527) in 16S rRNA + S-adenosyl-L-methionine = N(7)-methylguanosine(527) in 16S rRNA + S-adenosyl-L-homocysteine. In terms of biological role, specifically methylates the N7 position of guanine in position 527 of 16S rRNA. In Burkholderia lata (strain ATCC 17760 / DSM 23089 / LMG 22485 / NCIMB 9086 / R18194 / 383), this protein is Ribosomal RNA small subunit methyltransferase G.